The primary structure comprises 418 residues: Bifunctional enzyme IspD/IspF (418 aa).

The 2-C-methyl-D-erythritol 4-phosphate cytidylyltransferase stretch occupies residues 1–261 (MADTPALIPQ…EFKRASDMNF (261 aa)). A 2-C-methyl-D-erythritol 2,4-cyclodiphosphate synthase region spans residues 262–418 (RIGEGWDIHA…RATVLLRKFI (157 aa)). A divalent metal cation is bound by residues Asp-268 and His-270. 4-CDP-2-C-methyl-D-erythritol 2-phosphate contacts are provided by residues 268–270 (DIH) and 294–295 (HS). An a divalent metal cation-binding site is contributed by His-302. Residues 316 to 318 (DIG) and 321 to 325 (FPDTD) contribute to the 4-CDP-2-C-methyl-D-erythritol 2-phosphate site.

It in the N-terminal section; belongs to the IspD/TarI cytidylyltransferase family. IspD subfamily. The protein in the C-terminal section; belongs to the IspF family. It depends on a divalent metal cation as a cofactor.

It catalyses the reaction 2-C-methyl-D-erythritol 4-phosphate + CTP + H(+) = 4-CDP-2-C-methyl-D-erythritol + diphosphate. The enzyme catalyses 4-CDP-2-C-methyl-D-erythritol 2-phosphate = 2-C-methyl-D-erythritol 2,4-cyclic diphosphate + CMP. It participates in isoprenoid biosynthesis; isopentenyl diphosphate biosynthesis via DXP pathway; isopentenyl diphosphate from 1-deoxy-D-xylulose 5-phosphate: step 2/6. Its pathway is isoprenoid biosynthesis; isopentenyl diphosphate biosynthesis via DXP pathway; isopentenyl diphosphate from 1-deoxy-D-xylulose 5-phosphate: step 4/6. Functionally, bifunctional enzyme that catalyzes the formation of 4-diphosphocytidyl-2-C-methyl-D-erythritol from CTP and 2-C-methyl-D-erythritol 4-phosphate (MEP) (IspD), and catalyzes the conversion of 4-diphosphocytidyl-2-C-methyl-D-erythritol 2-phosphate (CDP-ME2P) to 2-C-methyl-D-erythritol 2,4-cyclodiphosphate (ME-CPP) with a corresponding release of cytidine 5-monophosphate (CMP) (IspF). In Albidiferax ferrireducens (strain ATCC BAA-621 / DSM 15236 / T118) (Rhodoferax ferrireducens), this protein is Bifunctional enzyme IspD/IspF.